We begin with the raw amino-acid sequence, 842 residues long: Glycogen phosphorylase, muscle form (842 aa).

The residue at position 2 (Ser-2) is an N-acetylserine. Ser-15 carries the post-translational modification Phosphoserine; by PHK; in form phosphorylase A. 2 residues coordinate AMP: Asp-43 and Tyr-76. Phosphotyrosine occurs at positions 204 and 227. 310–319 (RRFKSSKFGC) is a binding site for AMP. Ser-430 bears the Phosphoserine mark. Phosphotyrosine is present on Tyr-473. Position 514 is a phosphoserine (Ser-514). Residue Lys-681 is modified to N6-(pyridoxal phosphate)lysine. Phosphoserine is present on residues Ser-747 and Ser-748.

Belongs to the glycogen phosphorylase family. In terms of assembly, homodimer. Homotetramer; to form the enzymatically active phosphorylase A. Pyridoxal 5'-phosphate serves as cofactor. Phosphorylation of Ser-15 converts phosphorylase B (unphosphorylated) to phosphorylase A.

The catalysed reaction is [(1-&gt;4)-alpha-D-glucosyl](n) + phosphate = [(1-&gt;4)-alpha-D-glucosyl](n-1) + alpha-D-glucose 1-phosphate. Allosterically regulated through the non-covalent binding of metabolites, being activated by AMP and inhibited by ATP, ADP, and glucose-6-phosphate. The activity is also controlled by post-translational modifications including phosphorylation. In terms of biological role, allosteric enzyme that catalyzes the rate-limiting step in glycogen catabolism, the phosphorolytic cleavage of glycogen to produce glucose-1-phosphate, and plays a central role in maintaining cellular and organismal glucose homeostasis. This Macaca fascicularis (Crab-eating macaque) protein is Glycogen phosphorylase, muscle form.